Consider the following 487-residue polypeptide: Glutamyl-tRNA(Gln) amidotransferase subunit A (487 aa).

K78 serves as the catalytic Charge relay system. A compositionally biased stretch (polar residues) spans S135–W144. The disordered stretch occupies residues S135–G155. S153 functions as the Charge relay system in the catalytic mechanism. Residue S177 is the Acyl-ester intermediate of the active site.

The protein belongs to the amidase family. GatA subfamily. As to quaternary structure, heterotrimer of A, B and C subunits.

The enzyme catalyses L-glutamyl-tRNA(Gln) + L-glutamine + ATP + H2O = L-glutaminyl-tRNA(Gln) + L-glutamate + ADP + phosphate + H(+). Functionally, allows the formation of correctly charged Gln-tRNA(Gln) through the transamidation of misacylated Glu-tRNA(Gln) in organisms which lack glutaminyl-tRNA synthetase. The reaction takes place in the presence of glutamine and ATP through an activated gamma-phospho-Glu-tRNA(Gln). This chain is Glutamyl-tRNA(Gln) amidotransferase subunit A, found in Maridesulfovibrio salexigens (strain ATCC 14822 / DSM 2638 / NCIMB 8403 / VKM B-1763) (Desulfovibrio salexigens).